The following is a 165-amino-acid chain: MTLDLTLEDPRWTILPPLADRAISATLAQMGLDPELCEISLLGCDDARITALNAEFREKPSPTNVLSWPAEDLAAETPGGTPLAPEPDFTGAVPLGDIAIAFDTCQREADAAGKPIADHVTHLIVHGLLHLLGYDHIRDEDATLMEGLETRILGNLGIDDPYTME.

The Zn(2+) site is built by His126, His130, and His136.

This sequence belongs to the endoribonuclease YbeY family. Zn(2+) serves as cofactor.

It localises to the cytoplasm. Single strand-specific metallo-endoribonuclease involved in late-stage 70S ribosome quality control and in maturation of the 3' terminus of the 16S rRNA. This chain is Endoribonuclease YbeY, found in Ruegeria pomeroyi (strain ATCC 700808 / DSM 15171 / DSS-3) (Silicibacter pomeroyi).